The sequence spans 69 residues: DNA-directed RNA polymerase subunit epsilon (69 aa).

Belongs to the RNA polymerase subunit epsilon family. RNAP is composed of a core of 2 alpha, a beta and a beta' subunit. The core is associated with a delta subunit, and at least one of epsilon or omega. When a sigma factor is associated with the core the holoenzyme is formed, which can initiate transcription.

The catalysed reaction is RNA(n) + a ribonucleoside 5'-triphosphate = RNA(n+1) + diphosphate. Its function is as follows. A non-essential component of RNA polymerase (RNAP). The protein is DNA-directed RNA polymerase subunit epsilon of Shouchella clausii (strain KSM-K16) (Alkalihalobacillus clausii).